The sequence spans 42 residues: Photosystem I reaction center subunit IX (42 aa).

The helical transmembrane segment at 7 to 27 threads the bilayer; the sequence is YLSVAPVLSTLWFGSLAGLLI.

Belongs to the PsaJ family.

The protein resides in the plastid. It is found in the chloroplast thylakoid membrane. May help in the organization of the PsaE and PsaF subunits. The polypeptide is Photosystem I reaction center subunit IX (Daucus carota (Wild carrot)).